Here is a 606-residue protein sequence, read N- to C-terminus: Protein couch potato (606 aa).

The Nuclear localization signal signature appears at isoleucine 81–glutamine 105. 7 repeat units span residues proline 91–proline 95, alanine 109–leucine 113, proline 114–proline 118, proline 122–proline 126, proline 128–proline 132, proline 134–lysine 138, and proline 159–proline 163. A 7 X 5 AA approximate repeats of P-V-S-V-P region spans residues proline 91–histidine 164. 4 disordered regions span residues glutamine 147–histidine 166, glutamine 282–alanine 311, valine 324–alanine 365, and proline 388–serine 410. A compositionally biased stretch (low complexity) spans serine 344–alanine 365. In terms of domain architecture, RRM spans arginine 442–serine 524.

In terms of tissue distribution, expressed in neural precursors and their daughter cells in the embryonic peripheral nervous system. Less abundant in a number of glial cells in the peripheral and central nervous systems and also present at low levels in the developing gut.

It is found in the nucleus. Functionally, may play a role in the development or function of the peripheral nervous system by regulating the processing of nervous system-specific transcripts. This Drosophila melanogaster (Fruit fly) protein is Protein couch potato (cpo).